Here is an 88-residue protein sequence, read N- to C-terminus: Apolipoprotein C-I (88 aa).

An N-terminal signal peptide occupies residues 1–26 (MRLFLSLPVLVVVLAMVLEGPAPTQA).

This sequence belongs to the apolipoprotein C1 family.

The protein resides in the secreted. Inhibitor of lipoprotein binding to the low density lipoprotein (LDL) receptor, LDL receptor-related protein, and very low density lipoprotein (VLDL) receptor. Associates with high density lipoproteins (HDL) and the triacylglycerol-rich lipoproteins in the plasma and makes up about 10% of the protein of the VLDL and 2% of that of HDL. Appears to interfere directly with fatty acid uptake and is also the major plasma inhibitor of cholesteryl ester transfer protein (CETP). Binds free fatty acids and reduces their intracellular esterification. Modulates the interaction of APOE with beta-migrating VLDL and inhibits binding of beta-VLDL to the LDL receptor-related protein. This chain is Apolipoprotein C-I (APOC1), found in Phoca vitulina (Harbor seal).